Here is a 324-residue protein sequence, read N- to C-terminus: Phosphomevalonate decarboxylase (324 aa).

The protein belongs to the phosphomevalonate decarboxylase family.

The enzyme catalyses (R)-5-phosphomevalonate + ATP = isopentenyl phosphate + ADP + phosphate + CO2. Is strongly inhibited by 6-fluoromevalonate monophosphate but shows negligible inhibition by 6-fluoromevalonate diphosphate (a potent inhibitor of the classical mevalonate pathway). Its function is as follows. Catalyzes the decarboxylation of mevalonate 5-phosphate (MVAP) to isopentenyl phosphate (IP). Functions in an alternate mevalonate (MVA) pathway leading to isopentenyl diphosphate (IPP), a key precursor for the biosynthesis of isoprenoid compounds such as archaeal membrane lipids. The protein is Phosphomevalonate decarboxylase (mvaD) of Haloferax volcanii (strain ATCC 29605 / DSM 3757 / JCM 8879 / NBRC 14742 / NCIMB 2012 / VKM B-1768 / DS2) (Halobacterium volcanii).